Consider the following 68-residue polypeptide: Coiled-coil domain-containing protein 179 (68 aa).

Positions 11 to 68 are disordered; it reads SQVNPEGPRQHHPSEVTERQLANKRIQNMQHLKKEKRRLNKRFSRPSPIPEPGLLWSS. Positions 18 to 28 are enriched in basic and acidic residues; sequence PRQHHPSEVTE. A coiled-coil region spans residues 27 to 53; the sequence is TERQLANKRIQNMQHLKKEKRRLNKRF. Residues 41 to 54 show a composition bias toward basic residues; sequence HLKKEKRRLNKRFS.

The chain is Coiled-coil domain-containing protein 179 (CCDC179) from Homo sapiens (Human).